A 938-amino-acid chain; its full sequence is Isoleucine--tRNA ligase (938 aa).

The 'HIGH' region motif lies at 58–68; the sequence is PYANGNIHIGH. Position 561 (glutamate 561) interacts with L-isoleucyl-5'-AMP. The short motif at 602–606 is the 'KMSKS' region element; the sequence is KMSKS. Residue lysine 605 coordinates ATP. The Zn(2+) site is built by cysteine 901, cysteine 904, cysteine 921, and cysteine 924.

It belongs to the class-I aminoacyl-tRNA synthetase family. IleS type 1 subfamily. In terms of assembly, monomer. The cofactor is Zn(2+).

It is found in the cytoplasm. The catalysed reaction is tRNA(Ile) + L-isoleucine + ATP = L-isoleucyl-tRNA(Ile) + AMP + diphosphate. Catalyzes the attachment of isoleucine to tRNA(Ile). As IleRS can inadvertently accommodate and process structurally similar amino acids such as valine, to avoid such errors it has two additional distinct tRNA(Ile)-dependent editing activities. One activity is designated as 'pretransfer' editing and involves the hydrolysis of activated Val-AMP. The other activity is designated 'posttransfer' editing and involves deacylation of mischarged Val-tRNA(Ile). The protein is Isoleucine--tRNA ligase of Yersinia enterocolitica serotype O:8 / biotype 1B (strain NCTC 13174 / 8081).